The following is a 210-amino-acid chain: Guanylate kinase (210 aa).

A Guanylate kinase-like domain is found at 6-184; that stretch reads GTLYIISAPS…ALQDLKCIIQ (179 aa). 13–20 contributes to the ATP binding site; that stretch reads APSGAGKT.

The protein belongs to the guanylate kinase family.

The protein resides in the cytoplasm. It catalyses the reaction GMP + ATP = GDP + ADP. Functionally, essential for recycling GMP and indirectly, cGMP. This chain is Guanylate kinase, found in Nitrosospira multiformis (strain ATCC 25196 / NCIMB 11849 / C 71).